The chain runs to 593 residues: Probable metalloendopeptidase G1-type (593 aa).

His41 contacts Zn(2+). The active site involves Glu44. Residue His45 coordinates Zn(2+).

Belongs to the peptidase M44 family. Zn(2+) serves as cofactor.

Its function is as follows. Seems to be involved in viral proteins maturation by cleavage at Ala-Gly-|-Xaa motifs. This chain is Probable metalloendopeptidase G1-type, found in Homo sapiens (Human).